A 253-amino-acid chain; its full sequence is Trypsin delta (253 aa).

Positions Met-1–Gly-22 are cleaved as a signal peptide. Positions Leu-23 to Arg-30 are cleaved as a propeptide — activation peptide. In terms of domain architecture, Peptidase S1 spans Ile-31–Ala-253. A disulfide bridge connects residues Cys-56 and Cys-72. Active-site charge relay system residues include His-71 and Asp-116. 2 disulfide bridges follow: Cys-180–Cys-197 and Cys-206–Cys-230. Catalysis depends on Ser-210, which acts as the Charge relay system.

It belongs to the peptidase S1 family.

The protein resides in the secreted. It is found in the extracellular space. The catalysed reaction is Preferential cleavage: Arg-|-Xaa, Lys-|-Xaa.. The chain is Trypsin delta from Drosophila erecta (Fruit fly).